Here is a 291-residue protein sequence, read N- to C-terminus: Probable endonuclease 4 (291 aa).

Residues histidine 72, histidine 112, glutamate 147, aspartate 181, histidine 184, histidine 215, aspartate 228, histidine 230, and glutamate 260 each coordinate Zn(2+).

It belongs to the AP endonuclease 2 family. The cofactor is Zn(2+).

The enzyme catalyses Endonucleolytic cleavage to 5'-phosphooligonucleotide end-products.. In terms of biological role, endonuclease IV plays a role in DNA repair. It cleaves phosphodiester bonds at apurinic or apyrimidinic (AP) sites, generating a 3'-hydroxyl group and a 5'-terminal sugar phosphate. The polypeptide is Probable endonuclease 4 (Mycoplasma genitalium (strain ATCC 33530 / DSM 19775 / NCTC 10195 / G37) (Mycoplasmoides genitalium)).